Consider the following 460-residue polypeptide: Armadillo repeat-containing protein LFR (460 aa).

Residues 1–10 show a composition bias toward low complexity; it reads MSHVRSAPAG. The segment at 1 to 32 is disordered; the sequence is MSHVRSAPAGKSGGGGGSTPAKRGRPFGSTTG. 3 ARM repeats span residues 225-267, 321-360, and 364-405; these read ENET…NLAP, NEPFLLPAIPQIYKRLVDLLSVPAVDAQAAAISALYNVAE, and DFRL…SLVS.

As to quaternary structure, interacts with CHR719, SWI3A and SWI3C. As to expression, expressed at low levels in coleoptiles, leaf tongues, mature leaves and nodes during the vegetative phase. Highly expressed in reproductive tissues such as young panicles, early developing seeds, embryos and endosperms.

The protein resides in the nucleus. Functionally, plays critical roles in both embryo and endosperm development. Required for free nuclei division and cellularization in early endosperm development, by preventing premature cell death in the endosperm. Involved in the regulation of pattern formation and organ differentiation during embryogenesis, by regulating genes involved in the early stages of seed development. This chain is Armadillo repeat-containing protein LFR, found in Oryza sativa subsp. japonica (Rice).